A 276-amino-acid chain; its full sequence is 4-hydroxy-3-methylbut-2-enyl diphosphate reductase (276 aa).

Position 12 (cysteine 12) interacts with [4Fe-4S] cluster. 2 residues coordinate (2E)-4-hydroxy-3-methylbut-2-enyl diphosphate: histidine 36 and histidine 70. Histidine 36 and histidine 70 together coordinate dimethylallyl diphosphate. Isopentenyl diphosphate is bound by residues histidine 36 and histidine 70. Cysteine 92 lines the [4Fe-4S] cluster pocket. Residue histidine 120 participates in (2E)-4-hydroxy-3-methylbut-2-enyl diphosphate binding. Position 120 (histidine 120) interacts with dimethylallyl diphosphate. Residue histidine 120 coordinates isopentenyl diphosphate. Glutamate 122 (proton donor) is an active-site residue. Threonine 158 contacts (2E)-4-hydroxy-3-methylbut-2-enyl diphosphate. Cysteine 186 is a [4Fe-4S] cluster binding site. (2E)-4-hydroxy-3-methylbut-2-enyl diphosphate contacts are provided by serine 214, serine 215, asparagine 216, and serine 258. Positions 214, 215, 216, and 258 each coordinate dimethylallyl diphosphate. Residues serine 214, serine 215, asparagine 216, and serine 258 each coordinate isopentenyl diphosphate.

Belongs to the IspH family. Requires [4Fe-4S] cluster as cofactor.

It catalyses the reaction isopentenyl diphosphate + 2 oxidized [2Fe-2S]-[ferredoxin] + H2O = (2E)-4-hydroxy-3-methylbut-2-enyl diphosphate + 2 reduced [2Fe-2S]-[ferredoxin] + 2 H(+). It carries out the reaction dimethylallyl diphosphate + 2 oxidized [2Fe-2S]-[ferredoxin] + H2O = (2E)-4-hydroxy-3-methylbut-2-enyl diphosphate + 2 reduced [2Fe-2S]-[ferredoxin] + 2 H(+). It participates in isoprenoid biosynthesis; dimethylallyl diphosphate biosynthesis; dimethylallyl diphosphate from (2E)-4-hydroxy-3-methylbutenyl diphosphate: step 1/1. It functions in the pathway isoprenoid biosynthesis; isopentenyl diphosphate biosynthesis via DXP pathway; isopentenyl diphosphate from 1-deoxy-D-xylulose 5-phosphate: step 6/6. In terms of biological role, catalyzes the conversion of 1-hydroxy-2-methyl-2-(E)-butenyl 4-diphosphate (HMBPP) into a mixture of isopentenyl diphosphate (IPP) and dimethylallyl diphosphate (DMAPP). Acts in the terminal step of the DOXP/MEP pathway for isoprenoid precursor biosynthesis. The sequence is that of 4-hydroxy-3-methylbut-2-enyl diphosphate reductase from Wolinella succinogenes (strain ATCC 29543 / DSM 1740 / CCUG 13145 / JCM 31913 / LMG 7466 / NCTC 11488 / FDC 602W) (Vibrio succinogenes).